Reading from the N-terminus, the 383-residue chain is Acetylornithine deacetylase (383 aa).

Position 80 (histidine 80) interacts with Zn(2+). Aspartate 82 is a catalytic residue. Aspartate 112 serves as a coordination point for Zn(2+). The active site involves glutamate 144. Residues glutamate 145, glutamate 169, and histidine 355 each coordinate Zn(2+).

This sequence belongs to the peptidase M20A family. ArgE subfamily. As to quaternary structure, homodimer. Requires Zn(2+) as cofactor. Co(2+) is required as a cofactor. Glutathione serves as cofactor.

The protein resides in the cytoplasm. The enzyme catalyses N(2)-acetyl-L-ornithine + H2O = L-ornithine + acetate. It functions in the pathway amino-acid biosynthesis; L-arginine biosynthesis; L-ornithine from N(2)-acetyl-L-ornithine (linear): step 1/1. Its function is as follows. Catalyzes the hydrolysis of the amide bond of N(2)-acetylated L-amino acids. Cleaves the acetyl group from N-acetyl-L-ornithine to form L-ornithine, an intermediate in L-arginine biosynthesis pathway, and a branchpoint in the synthesis of polyamines. The protein is Acetylornithine deacetylase of Salmonella heidelberg (strain SL476).